The primary structure comprises 51 residues: MRDKIRLVSTAGTGFFYTTDKNKRNMPEKMEIKKFDPKIRKHVLFKEAKIK.

This sequence belongs to the bacterial ribosomal protein bL33 family.

This is Large ribosomal subunit protein bL33 from Pseudoalteromonas translucida (strain TAC 125).